Reading from the N-terminus, the 459-residue chain is Prenyltransferase penI (459 aa).

L-tryptophan contacts are provided by residues 107–108 and glutamate 111; that span reads VV. Arginine 126, arginine 276, lysine 278, tyrosine 280, and tyrosine 384 together coordinate substrate.

It belongs to the tryptophan dimethylallyltransferase family.

The catalysed reaction is quinolinone B + dimethylallyl diphosphate = peniprequinolone + diphosphate. It participates in secondary metabolite biosynthesis. Its pathway is alkaloid biosynthesis. It functions in the pathway mycotoxin biosynthesis. Prenyltransferase; part of the gene cluster that mediates the biosynthesis of penigequinolones, potent insecticidal alkaloids that contain a highly modified 10-carbon prenyl group. The first stage is catalyzed by the nonribosomal peptide synthetase penN that condenses anthranilic acid and O-methyl-L-tyrosine to produce 4'-methoxycyclopeptin. 4'-methoxycyclopeptin is then converted to 4'-methoxydehydrocyclopeptin by the ketoglutarate-dependent dioxygenase penM through dehydrogenation to form a double bond between C-alpha and C-beta of the O-methyltyrosine side chain. PenM also converts its first product methoxydehydrocyclopeptin to 4'-methoxycyclopenin. The following conversion of 4'methoxycyclopenin into 4'-methoxyviridicatin is catalyzed by the cyclopenase penL. 4'-methoxyviridicatin is the precursor of quinolone natural products, and is further converted to quinolinone B. The prenyltransferase penI then catalyzes the canonical Friedel-Crafts alkylation of quinolinone B with dimethylallyl cation to yield dimethylallyl quinolone, which is subjected to FAD-dependent dehydrogenation by the FAD-linked oxidoreductase penH to yield conjugated aryl diene. The delta(3') double bond then serves as the site of the second alkylation with DMAPP catalyzed by the prenyltransferase penG to yield a carbenium ion intermediate, which can be attacked by H(2)O to yield a styrenyl quinolone containing a C3'-hydroxyprenyl chain, or undergo cyclization to yield yaequinolones J1 and J2. The conversion of the styrenyl quinolone into the tetrahydrofuran-containing yaequinolone C is performed by the FAD-dependent monooxygenase penE and involves epoxidation of the terminal C7'-C8' olefin, followed by epoxide ring opening initiated by the C3' hydroxyl group. The predicted cysteine hydrolase penJ acts as an epoxide hydrolase that enhances the rate of the 5-exo-tet cyclization step, increasing the yield of yaequinolone C. PenF catalyzes the cationic rearrangement of the epoxide formed by penE (before ring opening to produce yaequinolone C) into yaequinolone D. Finally, the short-chain dehydrogenase/reductase (SDR)-like reductase penD, catalyzes both the dehydration of yaequinolone D and the reduction of the resulting oxonium to yield penigequinolone. This is Prenyltransferase penI from Penicillium thymicola.